We begin with the raw amino-acid sequence, 101 residues long: NADH-quinone oxidoreductase subunit K (101 aa).

3 helical membrane passes run 4 to 24 (LGHMLALGAVLFAISLAGIFL), 30 to 50 (IVLLMSIELMLLSVNVNFVAF), and 62 to 82 (FVFFILTVAAAEAAIGLAILV).

The protein belongs to the complex I subunit 4L family. NDH-1 is composed of 14 different subunits. Subunits NuoA, H, J, K, L, M, N constitute the membrane sector of the complex.

The protein resides in the cell inner membrane. The enzyme catalyses a quinone + NADH + 5 H(+)(in) = a quinol + NAD(+) + 4 H(+)(out). NDH-1 shuttles electrons from NADH, via FMN and iron-sulfur (Fe-S) centers, to quinones in the respiratory chain. The immediate electron acceptor for the enzyme in this species is believed to be ubiquinone. Couples the redox reaction to proton translocation (for every two electrons transferred, four hydrogen ions are translocated across the cytoplasmic membrane), and thus conserves the redox energy in a proton gradient. The protein is NADH-quinone oxidoreductase subunit K of Stenotrophomonas maltophilia (strain R551-3).